The chain runs to 335 residues: Galactinol synthase 2 (335 aa).

Lys103 is an active-site residue. 3 residues coordinate Mn(2+): Asp119, Asp121, and His257.

This sequence belongs to the glycosyltransferase 8 family. Galactosyltransferase subfamily. It depends on a divalent metal cation as a cofactor. Accumulates in mature seeds.

It localises to the cytoplasm. It carries out the reaction myo-inositol + UDP-alpha-D-galactose = alpha-D-galactosyl-(1-&gt;3)-1D-myo-inositol + UDP + H(+). In terms of biological role, galactinol synthase involved in the biosynthesis of raffinose family oligosaccharides (RFOs) that function as osmoprotectants. Promotes stress tolerance of factors such as drought, chilling, salinity and methylviologen (MV), a superoxide radical generating drug, by mediating an increase in levels of the endogenous osmoprotective compounds, galactinol and raffinose. The polypeptide is Galactinol synthase 2 (GOLS2) (Arabidopsis thaliana (Mouse-ear cress)).